The following is a 358-amino-acid chain: Heme A synthase 1 (358 aa).

Transmembrane regions (helical) follow at residues 11 to 31 (LVGT…VGGG), 98 to 117 (WGRL…RLRG), 123 to 143 (LTAW…MGWY), 159 to 179 (LYLG…LWTA), and 199 to 219 (LLSV…LVAA). Residue histidine 262 coordinates heme. A run of 3 helical transmembrane segments spans residues 264-284 (VAAT…LRAP), 292-312 (LFLL…STLV), and 315-335 (MAEL…ACIA). Position 322 (histidine 322) interacts with heme.

Belongs to the COX15/CtaA family. Type 2 subfamily. In terms of assembly, interacts with CtaB. Requires heme b as cofactor.

It localises to the cell membrane. It catalyses the reaction Fe(II)-heme o + 2 A + H2O = Fe(II)-heme a + 2 AH2. It functions in the pathway porphyrin-containing compound metabolism; heme A biosynthesis; heme A from heme O: step 1/1. Functionally, catalyzes the conversion of heme O to heme A by two successive hydroxylations of the methyl group at C8. The first hydroxylation forms heme I, the second hydroxylation results in an unstable dihydroxymethyl group, which spontaneously dehydrates, resulting in the formyl group of heme A. This chain is Heme A synthase 1, found in Acidiphilium cryptum (strain JF-5).